Reading from the N-terminus, the 185-residue chain is Elongation factor P (185 aa).

It belongs to the elongation factor P family.

The protein resides in the cytoplasm. It participates in protein biosynthesis; polypeptide chain elongation. Functionally, involved in peptide bond synthesis. Stimulates efficient translation and peptide-bond synthesis on native or reconstituted 70S ribosomes in vitro. Probably functions indirectly by altering the affinity of the ribosome for aminoacyl-tRNA, thus increasing their reactivity as acceptors for peptidyl transferase. The sequence is that of Elongation factor P from Geobacillus thermodenitrificans (strain NG80-2).